The following is a 226-amino-acid chain: 7-cyano-7-deazaguanine synthase (226 aa).

Residue 8–18 coordinates ATP; sequence ISGGLDSTTCL. Residues cysteine 188, cysteine 198, cysteine 201, and cysteine 204 each contribute to the Zn(2+) site.

This sequence belongs to the QueC family. Zn(2+) serves as cofactor.

It catalyses the reaction 7-carboxy-7-deazaguanine + NH4(+) + ATP = 7-cyano-7-deazaguanine + ADP + phosphate + H2O + H(+). Its pathway is purine metabolism; 7-cyano-7-deazaguanine biosynthesis. Catalyzes the ATP-dependent conversion of 7-carboxy-7-deazaguanine (CDG) to 7-cyano-7-deazaguanine (preQ(0)). The polypeptide is 7-cyano-7-deazaguanine synthase (Coxiella burnetii (strain Dugway 5J108-111)).